The chain runs to 931 residues: Protein translocase subunit SecA (931 aa).

Residues glutamine 87, glycine 105 to threonine 109, and aspartate 515 contribute to the ATP site. Zn(2+) contacts are provided by cysteine 915, cysteine 917, cysteine 926, and histidine 927.

It belongs to the SecA family. Monomer and homodimer. Part of the essential Sec protein translocation apparatus which comprises SecA, SecYEG and auxiliary proteins SecDF-YajC and YidC. Zn(2+) serves as cofactor.

It localises to the cell inner membrane. Its subcellular location is the cytoplasm. It carries out the reaction ATP + H2O + cellular proteinSide 1 = ADP + phosphate + cellular proteinSide 2.. In terms of biological role, part of the Sec protein translocase complex. Interacts with the SecYEG preprotein conducting channel. Has a central role in coupling the hydrolysis of ATP to the transfer of proteins into and across the cell membrane, serving both as a receptor for the preprotein-SecB complex and as an ATP-driven molecular motor driving the stepwise translocation of polypeptide chains across the membrane. This Burkholderia ambifaria (strain MC40-6) protein is Protein translocase subunit SecA.